The chain runs to 417 residues: Tryptophan synthase beta chain (417 aa).

Position 99 is an N6-(pyridoxal phosphate)lysine (lysine 99).

This sequence belongs to the TrpB family. Tetramer of two alpha and two beta chains. Requires pyridoxal 5'-phosphate as cofactor.

It carries out the reaction (1S,2R)-1-C-(indol-3-yl)glycerol 3-phosphate + L-serine = D-glyceraldehyde 3-phosphate + L-tryptophan + H2O. The protein operates within amino-acid biosynthesis; L-tryptophan biosynthesis; L-tryptophan from chorismate: step 5/5. In terms of biological role, the beta subunit is responsible for the synthesis of L-tryptophan from indole and L-serine. The sequence is that of Tryptophan synthase beta chain from Corynebacterium glutamicum (strain R).